Consider the following 175-residue polypeptide: MGPRNPSPDPLSESESEEEENTNYLNESSGEEWDSSEEEDPVVPNLTPLESLAWQVKCLLKYSTTWKPLNPNSWLYHAKLLDASTPVHILREIGLRLSHCSHCVPKLEPIPEWPPLASCGVPPFQKPLISPSRLSRDHATLNGALQFATKQLSRTLSRATPHAFLPKLVPLAFSS.

Residues 1-42 (MGPRNPSPDPLSESESEEEENTNYLNESSGEEWDSSEEEDPV) are disordered. 2 stretches are compositionally biased toward acidic residues: residues 12 to 21 (SESESEEEEN) and 29 to 41 (SGEEWDSSEEEDP). Lysine 61 carries the post-translational modification N6-acetyllysine.

In terms of assembly, interacts with DDB1 and CUL4A.

The protein localises to the nucleus. It participates in protein modification; protein ubiquitination. Functions as a substrate recognition component for CUL4-DDB1 E3 ubiquitin-protein ligase complex, which mediates ubiquitination and proteasome-dependent degradation of nuclear proteins. This Bos taurus (Bovine) protein is DDB1- and CUL4-associated factor 16 (DCAF16).